A 360-amino-acid chain; its full sequence is 3-dehydroquinate synthase (360 aa).

Residues 69–74, 103–107, 127–128, lysine 140, lysine 149, and 167–170 contribute to the NAD(+) site; these read DGEAYK, GVIGD, TT, and CLQT. Positions 182, 245, and 262 each coordinate Zn(2+).

Belongs to the sugar phosphate cyclases superfamily. Dehydroquinate synthase family. Co(2+) serves as cofactor. It depends on Zn(2+) as a cofactor. Requires NAD(+) as cofactor.

The protein localises to the cytoplasm. It catalyses the reaction 7-phospho-2-dehydro-3-deoxy-D-arabino-heptonate = 3-dehydroquinate + phosphate. It functions in the pathway metabolic intermediate biosynthesis; chorismate biosynthesis; chorismate from D-erythrose 4-phosphate and phosphoenolpyruvate: step 2/7. In terms of biological role, catalyzes the conversion of 3-deoxy-D-arabino-heptulosonate 7-phosphate (DAHP) to dehydroquinate (DHQ). The chain is 3-dehydroquinate synthase from Aeromonas hydrophila subsp. hydrophila (strain ATCC 7966 / DSM 30187 / BCRC 13018 / CCUG 14551 / JCM 1027 / KCTC 2358 / NCIMB 9240 / NCTC 8049).